The chain runs to 233 residues: Small ribosomal subunit protein uS5 (233 aa).

Polar residues predominate over residues 1–13; the sequence is MAEETQNTVATES. Residues 1 to 40 are disordered; it reads MAEETQNTVATESNNEDRKGRRGQRGEGRRGERRNRREEN. Residues 15–40 show a composition bias toward basic and acidic residues; sequence NEDRKGRRGQRGEGRRGERRNRREEN. The region spanning 45–108 is the S5 DRBM domain; it reads LLDRVVTINR…LDAKKHMFSV (64 aa).

This sequence belongs to the universal ribosomal protein uS5 family. As to quaternary structure, part of the 30S ribosomal subunit. Contacts proteins S4 and S8.

In terms of biological role, with S4 and S12 plays an important role in translational accuracy. Functionally, located at the back of the 30S subunit body where it stabilizes the conformation of the head with respect to the body. The sequence is that of Small ribosomal subunit protein uS5 from Bifidobacterium longum (strain NCC 2705).